We begin with the raw amino-acid sequence, 359 residues long: 3-dehydroquinate synthase (359 aa).

NAD(+)-binding positions include 72–77 (EGEIHK), 106–110 (GVIGD), 130–131 (TS), Lys143, Lys152, and 170–173 (CLKT). 3 residues coordinate Zn(2+): Glu185, His248, and His264.

Belongs to the sugar phosphate cyclases superfamily. Dehydroquinate synthase family. Co(2+) is required as a cofactor. It depends on Zn(2+) as a cofactor. NAD(+) serves as cofactor.

The protein resides in the cytoplasm. It carries out the reaction 7-phospho-2-dehydro-3-deoxy-D-arabino-heptonate = 3-dehydroquinate + phosphate. It participates in metabolic intermediate biosynthesis; chorismate biosynthesis; chorismate from D-erythrose 4-phosphate and phosphoenolpyruvate: step 2/7. Functionally, catalyzes the conversion of 3-deoxy-D-arabino-heptulosonate 7-phosphate (DAHP) to dehydroquinate (DHQ). The chain is 3-dehydroquinate synthase from Dehalococcoides mccartyi (strain ATCC BAA-2266 / KCTC 15142 / 195) (Dehalococcoides ethenogenes (strain 195)).